Here is a 100-residue protein sequence, read N- to C-terminus: Co-chaperonin GroES (100 aa).

The protein belongs to the GroES chaperonin family. Heptamer of 7 subunits arranged in a ring. Interacts with the chaperonin GroEL.

It localises to the cytoplasm. In terms of biological role, together with the chaperonin GroEL, plays an essential role in assisting protein folding. The GroEL-GroES system forms a nano-cage that allows encapsulation of the non-native substrate proteins and provides a physical environment optimized to promote and accelerate protein folding. GroES binds to the apical surface of the GroEL ring, thereby capping the opening of the GroEL channel. This is Co-chaperonin GroES from Rhodothermus marinus (Rhodothermus obamensis).